A 167-amino-acid chain; its full sequence is Crossover junction endodeoxyribonuclease RuvC (167 aa).

Active-site residues include Asp8, Glu67, and Asp139. Asp8, Glu67, and Asp139 together coordinate Mg(2+).

The protein belongs to the RuvC family. In terms of assembly, homodimer which binds Holliday junction (HJ) DNA. The HJ becomes 2-fold symmetrical on binding to RuvC with unstacked arms; it has a different conformation from HJ DNA in complex with RuvA. In the full resolvosome a probable DNA-RuvA(4)-RuvB(12)-RuvC(2) complex forms which resolves the HJ. It depends on Mg(2+) as a cofactor.

It localises to the cytoplasm. The enzyme catalyses Endonucleolytic cleavage at a junction such as a reciprocal single-stranded crossover between two homologous DNA duplexes (Holliday junction).. In terms of biological role, the RuvA-RuvB-RuvC complex processes Holliday junction (HJ) DNA during genetic recombination and DNA repair. Endonuclease that resolves HJ intermediates. Cleaves cruciform DNA by making single-stranded nicks across the HJ at symmetrical positions within the homologous arms, yielding a 5'-phosphate and a 3'-hydroxyl group; requires a central core of homology in the junction. The consensus cleavage sequence is 5'-(A/T)TT(C/G)-3'. Cleavage occurs on the 3'-side of the TT dinucleotide at the point of strand exchange. HJ branch migration catalyzed by RuvA-RuvB allows RuvC to scan DNA until it finds its consensus sequence, where it cleaves and resolves the cruciform DNA. This Halorhodospira halophila (strain DSM 244 / SL1) (Ectothiorhodospira halophila (strain DSM 244 / SL1)) protein is Crossover junction endodeoxyribonuclease RuvC.